The chain runs to 444 residues: uncharacterized protein (444 aa).

Helical transmembrane passes span 9 to 29 (LIVSLLLGAILVPINSTMIAV), 42 to 62 (IASITWVVTVYLIVMAVTQPI), 82 to 102 (LFLIASLGCALSPSLLLLIVF), 104 to 126 (ALQAVGGALLTPNSIAIIRHVVS), 136 to 156 (FFGLGAGLGAALGPFIGSILI), 164 to 184 (IFWVNIPFLAIALFTALTMFP), 193 to 213 (APLDIIGSLLLAGSIVSIILL), 217 to 237 (EAPWGYTVYSVLILLFVPLFF), 263 to 283 (LSVLLSNLMMYAVLLIMPLFM), 295 to 315 (GMALSVFSIFMSASNWVGAQL), 324 to 344 (IIFLSFAMMAGANLLFLLLSS), 347 to 367 (SVLFLMLSLILGGLASGVGLT), 387 to 407 (GIFSTFRYFGSIISSALIGLI), and 411 to 431 (HTLFMILFAVSIIGVFVSLGI).

This sequence belongs to the major facilitator superfamily. TCR/Tet family.

Its subcellular location is the cell membrane. This is an uncharacterized protein from Bacillus subtilis (strain 168).